Consider the following 239-residue polypeptide: Ribonuclease 3 (239 aa).

One can recognise an RNase III domain in the interval R12 to G137. E50 contributes to the Mg(2+) binding site. D54 is an active-site residue. Mg(2+) contacts are provided by D123 and E126. E126 is a catalytic residue. The region spanning D162–I231 is the DRBM domain.

This sequence belongs to the ribonuclease III family. As to quaternary structure, homodimer. Mg(2+) serves as cofactor.

Its subcellular location is the cytoplasm. The enzyme catalyses Endonucleolytic cleavage to 5'-phosphomonoester.. Its function is as follows. Digests double-stranded RNA. Involved in the processing of primary rRNA transcript to yield the immediate precursors to the large and small rRNAs (23S and 16S). Processes some mRNAs, and tRNAs when they are encoded in the rRNA operon. Processes pre-crRNA and tracrRNA of type II CRISPR loci if present in the organism. This Rhizobium leguminosarum bv. trifolii (strain WSM2304) protein is Ribonuclease 3.